The chain runs to 102 residues: Small ribosomal subunit protein uS10 (102 aa).

Belongs to the universal ribosomal protein uS10 family. Part of the 30S ribosomal subunit.

In terms of biological role, involved in the binding of tRNA to the ribosomes. This Oceanobacillus iheyensis (strain DSM 14371 / CIP 107618 / JCM 11309 / KCTC 3954 / HTE831) protein is Small ribosomal subunit protein uS10.